Consider the following 132-residue polypeptide: Nitrogenase iron-iron protein delta chain (132 aa).

As to quaternary structure, hexamer of two alpha, two beta, and two delta chains. It depends on iron-sulfur cluster as a cofactor.

The catalysed reaction is N2 + 8 reduced [2Fe-2S]-[ferredoxin] + 16 ATP + 16 H2O = H2 + 8 oxidized [2Fe-2S]-[ferredoxin] + 2 NH4(+) + 16 ADP + 16 phosphate + 6 H(+). The key enzymatic reactions in nitrogen fixation are catalyzed by the nitrogenase complex, which has 2 components: the iron protein (component 2) and a component 1 which is either a molybdenum-iron protein, a vanadium-iron, or an iron-iron protein. The chain is Nitrogenase iron-iron protein delta chain (anfG) from Azotobacter vinelandii.